A 561-amino-acid polypeptide reads, in one-letter code: Sensor histidine kinase BtsS (561 aa).

At 1 to 3 the chain is on the cytoplasmic side; that stretch reads MYD. Residues 4–24 traverse the membrane as a helical segment; it reads FNLVLLLLQQMCVFLVIAWLM. Over 25-43 the chain is Periplasmic; it reads SKTPLFIPLMQVTVRLPHK. A helical membrane pass occupies residues 44-64; the sequence is FLCYIVFSIFCIMGTWFGLHI. The Cytoplasmic segment spans residues 65-72; that stretch reads DDSIANTR. The chain crosses the membrane as a helical span at residues 73–93; the sequence is AIGAVMGGLLGGPVVGGLVGL. Topologically, residues 94–108 are periplasmic; sequence TGGLHRYSMGGMTAL. The chain crosses the membrane as a helical span at residues 109–129; sequence SCMISTIVEGLLGGLVHSILI. Topologically, residues 130–140 are cytoplasmic; sequence RRGRTDKVFNP. Residues 141 to 161 form a helical membrane-spanning segment; it reads ITAGAVTFVAEMVQMLIILAI. Residues 162–170 are Periplasmic-facing; that stretch reads ARPYEDAVR. The chain crosses the membrane as a helical span at residues 171–191; the sequence is LVSNIAAPMMVTNTVGAALFM. Over 192 to 561 the chain is Cytoplasmic; that stretch reads RILLDKRAMF…TLRLPWRDEA (370 aa). Positions 354–559 constitute a Histidine kinase domain; that stretch reads QILAGQYERQ…RITLRLPWRD (206 aa).

In terms of processing, autophosphorylated.

Its subcellular location is the cell inner membrane. The catalysed reaction is ATP + protein L-histidine = ADP + protein N-phospho-L-histidine.. Member of the two-component regulatory system BtsS/BtsR. BtsS is a high-affinity receptor for extracellular pyruvate that activates BtsR by phosphorylation. In Escherichia coli O6:H1 (strain CFT073 / ATCC 700928 / UPEC), this protein is Sensor histidine kinase BtsS.